Consider the following 550-residue polypeptide: Kinase suppressor of Ras B (550 aa).

2 stretches are compositionally biased toward low complexity: residues 21–56 (SFSS…SNPI) and 63–75 (ATSS…STSS). Residues 21 to 87 (SFSSWRRSST…PPPASAPPRI (67 aa)) form a disordered region. The Phorbol-ester/DAG-type zinc-finger motif lies at 90–145 (YHKMVPSKSKFRQCDVCEHIFIFDFVRKQHLDDVYACNVCGIRVHKGCLDRVKNDC). The tract at residues 172–196 (TTASISKSLTTSPTCSTSTTMSPAG) is disordered. A compositionally biased stretch (low complexity) spans 177–193 (SKSLTTSPTCSTSTTMS). A Protein kinase domain is found at 248-528 (VDVMTKIGDG…FQQIVKRITV (281 aa)). The tract at residues 530 to 550 (MPRKESNKQKRRSTAHENPLF) is disordered.

This sequence belongs to the protein kinase superfamily. TKL Ser/Thr protein kinase family. In terms of assembly, interacts with ndk-1.

Functionally, probable inactive protein kinase which positively regulates Ras-mediated signaling probably acting at the level of let-60/ras or/and lin-45/raf. In the germline, regulates meiotic progression during oogenesis and mpk-1 (isoform b) phosphorylation. Plays a role in meiotic recombination events. Functions redundantly with ksr-1 in the Ras-mediated regulation of larval survival, the development of excretory canal, in determining vulval precursor cell fate during vulval induction and in mpk-1 phosphorylation in somatic cells. The chain is Kinase suppressor of Ras B from Caenorhabditis elegans.